The sequence spans 433 residues: tRNA modification GTPase MnmE (433 aa).

Residues Arg24, Glu86, and Lys125 each contribute to the (6S)-5-formyl-5,6,7,8-tetrahydrofolate site. The region spanning 218–363 (GARLALIGAP…LKEALREALL (146 aa)) is the TrmE-type G domain. Asn228 is a K(+) binding site. Residues 228–233 (NAGKSS), 247–253 (SPIPGTT), and 272–275 (DTAG) contribute to the GTP site. Ser232 is a binding site for Mg(2+). Positions 247, 249, and 252 each coordinate K(+). Position 253 (Thr253) interacts with Mg(2+). Lys433 contacts (6S)-5-formyl-5,6,7,8-tetrahydrofolate.

It belongs to the TRAFAC class TrmE-Era-EngA-EngB-Septin-like GTPase superfamily. TrmE GTPase family. As to quaternary structure, homodimer. Heterotetramer of two MnmE and two MnmG subunits. The cofactor is K(+).

The protein resides in the cytoplasm. Exhibits a very high intrinsic GTPase hydrolysis rate. Involved in the addition of a carboxymethylaminomethyl (cmnm) group at the wobble position (U34) of certain tRNAs, forming tRNA-cmnm(5)s(2)U34. The polypeptide is tRNA modification GTPase MnmE (Thermus thermophilus (strain ATCC BAA-163 / DSM 7039 / HB27)).